Here is a 20-residue protein sequence, read N- to C-terminus: Cytochrome P450IIB (20 aa).

Belongs to the cytochrome P450 family. Requires heme as cofactor.

Its subcellular location is the endoplasmic reticulum membrane. It is found in the microsome membrane. It catalyses the reaction an organic molecule + reduced [NADPH--hemoprotein reductase] + O2 = an alcohol + oxidized [NADPH--hemoprotein reductase] + H2O + H(+). Cytochromes P450 are a group of heme-thiolate monooxygenases. In liver microsomes, this enzyme is involved in an NADPH-dependent electron transport pathway. This isozyme is active upon P.nitroanisole, aniline, D-benzphetamine, delta(9)-tetrahydrocannabinol (THC) and strychnine. The sequence is that of Cytochrome P450IIB from Cavia porcellus (Guinea pig).